The primary structure comprises 3788 residues: Lysosomal-trafficking regulator (3788 aa).

Disordered regions lie at residues 148-180 (KSTH…TVVS) and 198-217 (EGHL…VLSD). S164 is modified (phosphoserine). T165 carries the phosphothreonine modification. At S166 the chain carries Phosphoserine. Residues 662-700 (GPTSGLPSPSYRFQGILPSSGSEDLLWKWDALEAYQSFV) form a WD 1 repeat. 3 disordered regions span residues 1169-1196 (LGPG…FSEE), 1213-1240 (GYEA…EAEG), and 1482-1519 (ESAA…TESI). A compositionally biased stretch (acidic residues) spans 1213 to 1232 (GYEADSESNPEDVDTQDDGV). A phosphoserine mark is found at S1503 and S1504. The stretch at 1576–1620 (SQENIFFPSKWQHLVLTYIQHPQGKKNVHGEISIWVSGQRKTDVI) is one WD 2 repeat. A phosphoserine mark is found at S2099, S2118, S2203, S2207, and S2254. A disordered region spans residues 2177–2221 (ANGVSRGSPRFPRARVDHKDVGTEPRSDDDSPGDESYPRRPDNLK). Over residues 2190–2205 (ARVDHKDVGTEPRSDD) the composition is skewed to basic and acidic residues. Disordered stretches follow at residues 2556–2581 (HDSE…SIAG) and 2659–2681 (NTSQ…HHEQ). Positions 2566–2578 (SAHRHSVPPKRRS) are enriched in basic residues. Positions 2659 to 2671 (NTSQSKTSVSQTE) are enriched in polar residues. The region spanning 2996–3102 (AASESIRVNR…VRDDVYQSIL (107 aa)) is the BEACH-type PH domain. The region spanning 3126 to 3409 (QITNFEYLTH…QLFHTAHASR (284 aa)) is the BEACH domain. 5 WD repeats span residues 3550–3589 (SQQH…STPS), 3601–3640 (GHTE…YVQS), 3643–3686 (GHKS…VGHV), 3687–3731 (HCRE…PVRE), and 3736–3775 (KSNK…RVKL).

Interacts with CPAP, LIP8 and ZNF521. In terms of tissue distribution, expressed in the heart, lung, liver, spleen, brain and in different immune cell types (purified B and T lymphocytes, bone marrow-derived macrophages and dendritic cells).

It is found in the cytoplasm. In terms of biological role, adapter protein that regulates and/or fission of intracellular vesicles such as lysosomes. Might regulate trafficking of effectors involved in exocytosis. In cytotoxic T-cells and natural killer (NK) cells, has role in the regulation of size, number and exocytosis of lytic granules. In macrophages and dendritic cells, regulates phagosome maturation by controlling the conversion of early phagosomal compartments into late phagosomes. In macrophages and dendritic cells, specifically involved in TLR3- and TLR4-induced production of pro-inflammatory cytokines by regulating the endosomal TLR3- TICAM1/TRIF and TLR4- TICAM1/TRIF signaling pathways. The protein is Lysosomal-trafficking regulator (Lyst) of Mus musculus (Mouse).